Consider the following 331-residue polypeptide: Serpentine receptor class alpha-1 (331 aa).

7 consecutive transmembrane segments (helical) span residues 22–42 (FAVF…VIAV), 57–77 (IILV…AIIS), 104–124 (YTEV…GILI), 143–163 (VGII…QIII), 189–209 (FLFI…AVMF), 238–258 (ICVV…GVLI), and 274–294 (LITW…ILIF).

The protein belongs to the nematode receptor-like protein sra family.

The protein localises to the membrane. In Caenorhabditis elegans, this protein is Serpentine receptor class alpha-1 (sra-1).